The chain runs to 1173 residues: Fas-binding factor 1 (1173 aa).

Residues 17-168 (MALRTKKGLK…PSSSKTGLQY (152 aa)) form a disordered region. Residues 46–56 (KPAEPASHAKD) show a composition bias toward basic and acidic residues. Over residues 80-93 (AGADAEASSVSDAD) the composition is skewed to low complexity. The residue at position 172 (Ser172) is a Phosphoserine. Disordered stretches follow at residues 180-225 (LAGL…GDTP) and 241-566 (TTLG…SSRE). A compositionally biased stretch (low complexity) spans 206–216 (SPGAAAGQGPS). 2 stretches are compositionally biased toward basic and acidic residues: residues 247-258 (DSPKAERKKTGD) and 287-299 (TGER…DKKY). Composition is skewed to polar residues over residues 331-345 (VASS…QSVS), 396-411 (SPVQ…MTPS), 468-477 (VISQKKSQNL), and 533-544 (TGSSMSWSQATT). 3 coiled-coil regions span residues 617–742 (TAQL…QQAS), 808–917 (QQRE…MNKC), and 975–1057 (CELR…VQRQ). Residue Lys1002 forms a Glycyl lysine isopeptide (Lys-Gly) (interchain with G-Cter in SUMO2) linkage. The interval 1091–1124 (ASLPGLPPRVQGPAASSRDAVQAPASSSPQCSQP) is disordered. Low complexity predominate over residues 1110–1124 (AVQAPASSSPQCSQP).

In terms of assembly, interacts with PARD3. May interact with FAS cytoplasmic domain. Interacts with TRAPPC14. As to expression, broadly expressed.

The protein resides in the cytoplasm. Its subcellular location is the cytoskeleton. It localises to the microtubule organizing center. It is found in the centrosome. The protein localises to the centriole. The protein resides in the spindle pole. Its subcellular location is the cell junction. Keratin-binding protein required for epithelial cell polarization. Involved in apical junction complex (AJC) assembly via its interaction with PARD3. Required for ciliogenesis. The protein is Fas-binding factor 1 (Fbf1) of Mus musculus (Mouse).